The sequence spans 162 residues: MNILGIDPGSRNCGYAILHHDPKKGNRLVEAGLIKIKERTLQHQILEFVEGIDLVLKNHSIDEVAIEDIFYAYNPKTVIKLAQFRGALSLKILQDLGNFYEYTPLQVKKALTGHGKADKSQVAFMVKRLLGLKGEIKPLDITDAIAVAITHSQRIKLGGIPT.

Active-site residues include D7, E67, and D140. The Mg(2+) site is built by D7, E67, and D140.

Belongs to the RuvC family. As to quaternary structure, homodimer which binds Holliday junction (HJ) DNA. The HJ becomes 2-fold symmetrical on binding to RuvC with unstacked arms; it has a different conformation from HJ DNA in complex with RuvA. In the full resolvosome a probable DNA-RuvA(4)-RuvB(12)-RuvC(2) complex forms which resolves the HJ. Mg(2+) is required as a cofactor.

Its subcellular location is the cytoplasm. It catalyses the reaction Endonucleolytic cleavage at a junction such as a reciprocal single-stranded crossover between two homologous DNA duplexes (Holliday junction).. The RuvA-RuvB-RuvC complex processes Holliday junction (HJ) DNA during genetic recombination and DNA repair. Endonuclease that resolves HJ intermediates. Cleaves cruciform DNA by making single-stranded nicks across the HJ at symmetrical positions within the homologous arms, yielding a 5'-phosphate and a 3'-hydroxyl group; requires a central core of homology in the junction. The consensus cleavage sequence is 5'-(A/T)TT(C/G)-3'. Cleavage occurs on the 3'-side of the TT dinucleotide at the point of strand exchange. HJ branch migration catalyzed by RuvA-RuvB allows RuvC to scan DNA until it finds its consensus sequence, where it cleaves and resolves the cruciform DNA. In Wolinella succinogenes (strain ATCC 29543 / DSM 1740 / CCUG 13145 / JCM 31913 / LMG 7466 / NCTC 11488 / FDC 602W) (Vibrio succinogenes), this protein is Crossover junction endodeoxyribonuclease RuvC.